The following is a 394-amino-acid chain: Phosphopentomutase (394 aa).

Asp14, Asp287, His292, Asp328, His329, and His340 together coordinate Mn(2+).

It belongs to the phosphopentomutase family. Mn(2+) is required as a cofactor.

The protein localises to the cytoplasm. The catalysed reaction is 2-deoxy-alpha-D-ribose 1-phosphate = 2-deoxy-D-ribose 5-phosphate. The enzyme catalyses alpha-D-ribose 1-phosphate = D-ribose 5-phosphate. Its pathway is carbohydrate degradation; 2-deoxy-D-ribose 1-phosphate degradation; D-glyceraldehyde 3-phosphate and acetaldehyde from 2-deoxy-alpha-D-ribose 1-phosphate: step 1/2. Isomerase that catalyzes the conversion of deoxy-ribose 1-phosphate (dRib-1-P) and ribose 1-phosphate (Rib-1-P) to deoxy-ribose 5-phosphate (dRib-5-P) and ribose 5-phosphate (Rib-5-P), respectively. This Listeria monocytogenes serotype 4b (strain CLIP80459) protein is Phosphopentomutase.